An 833-amino-acid polypeptide reads, in one-letter code: Transmembrane protease serine 7 (833 aa).

At 1 to 62 the chain is on the cytoplasmic side; it reads MDKEKSDPSC…RAPFWNVQNK (62 aa). The segment at 30–49 is disordered; the sequence is KLPGRRLPRKPIGKARPRKQ. The segment covering 32–49 has biased composition (basic residues); the sequence is PGRRLPRKPIGKARPRKQ. The helical; Signal-anchor for type II membrane protein transmembrane segment at 63–83 threads the bilayer; the sequence is IILFTVFLFILAVTAWTLLWL. The Extracellular portion of the chain corresponds to 84-829; it reads YISKTDSKDA…NFVPWIHKYV (746 aa). The SEA domain occupies 92 to 220; the sequence is DAFYFVGMFR…DSVVLNAGLR (129 aa). An N-linked (GlcNAc...) asparagine glycan is attached at N196. 3 cysteine pairs are disulfide-bonded: C233-C259, C285-C312, and C355-C386. CUB domains follow at residues 233 to 350 and 355 to 471; these read CSQY…FEVI and CENT…YNIS. Residues N405 and N469 are each glycosylated (N-linked (GlcNAc...) asparagine). LDL-receptor class A domains are found at residues 473–509 and 548–585; these read PCPA…LFCV and PCTN…EGCG. 7 cysteine pairs are disulfide-bonded: C474/C486, C481/C499, C493/C508, C549/C561, C556/C575, C569/C584, and C621/C637. The Peptidase S1 domain maps to 596–830; that stretch reads VVGGSDSQEG…FVPWIHKYVP (235 aa). Residues H636 and D684 each act as charge relay system in the active site. 3 disulfides stabilise this stretch: C720–C786, C752–C765, and C776–C806. Catalysis depends on S780, which acts as the Charge relay system.

This sequence belongs to the peptidase S1 family. As to quaternary structure, forms a heterodimer with SERPINA5. N-glycosylated.

The protein resides in the cell membrane. Its function is as follows. Serine protease which preferentially hydrolyzes peptides with Arg at the P1 position. The polypeptide is Transmembrane protease serine 7 (Rattus norvegicus (Rat)).